The sequence spans 607 residues: Translation initiation factor IF-2 (607 aa).

The segment at 54-93 is disordered; sequence SAPQAQDSTPVAETPAAAQPAAPQAASSQPAAAQAAQAVA. Over residues 62-93 the composition is skewed to low complexity; it reads TPVAETPAAAQPAAPQAASSQPAAAQAAQAVA. The 174-residue stretch at 108 to 281 folds into the tr-type G domain; that stretch reads HRAPVVTIMG…ELEDLRADPK (174 aa). A G1 region spans residues 117-124; that stretch reads GHVDHGKT. 117 to 124 is a GTP binding site; the sequence is GHVDHGKT. The G2 stretch occupies residues 142–146; sequence GITQH. The interval 163–166 is G3; it reads DTPG. GTP-binding positions include 163–167 and 217–220; these read DTPGH and NKVD. The interval 217 to 220 is G4; it reads NKVD. The interval 253-255 is G5; sequence SAK.

It belongs to the TRAFAC class translation factor GTPase superfamily. Classic translation factor GTPase family. IF-2 subfamily.

The protein resides in the cytoplasm. Functionally, one of the essential components for the initiation of protein synthesis. Protects formylmethionyl-tRNA from spontaneous hydrolysis and promotes its binding to the 30S ribosomal subunits. Also involved in the hydrolysis of GTP during the formation of the 70S ribosomal complex. This Deinococcus deserti (strain DSM 17065 / CIP 109153 / LMG 22923 / VCD115) protein is Translation initiation factor IF-2.